Reading from the N-terminus, the 201-residue chain is Recombination protein RecR (201 aa).

The C4-type zinc-finger motif lies at 57-72; it reads CADCRTFTEQEHCTIC. In terms of domain architecture, Toprim spans 81-176; the sequence is GQICVVESPA…LASRIAHGVP (96 aa).

It belongs to the RecR family.

In terms of biological role, may play a role in DNA repair. It seems to be involved in an RecBC-independent recombinational process of DNA repair. It may act with RecF and RecO. This Yersinia pestis bv. Antiqua (strain Antiqua) protein is Recombination protein RecR.